The primary structure comprises 446 residues: MMDVQTVRRGNAVQSLMSKLILPLVMAVAFALPARAALQIDITQGNVDPLPIAITDFVGEGSVGADMSAVISNNLERSGLFRPLPKASFIEKVSDINVQPRFGDWRVINSQALVTGQTRMEADGRLRVEFRLWDVLGEQQLTGLQFFTTPDNWRRVAHLISDAIYKRLTGEDGYFDTRIVYVSETGPKNARVKRLTIMDQDGHNPRMLTRGNELVLTPRFSPNSQEITYLAYRNNQPRVYVLDIETGQQEVVGEFPGMTFAPRFSPDGQRIIMSLQRGGNSDIYTMDLRSRQVVRLTNTAAIDTAPSYSPDGRQITFESDRGGSQQIYVMDASGSNQRRISFGQGSYATPVWSPRGDLIAFTKITGGRFVIGVMRPDGTGERVLTDGFHNEGPTWAPNGRVLMFFRETRGAQGGPSLWSVDVTGYNERPSPTPTFASDPAWSPRIQ.

An N-terminal signal peptide occupies residues 1–36; sequence MMDVQTVRRGNAVQSLMSKLILPLVMAVAFALPARA. The tract at residues 424–446 is disordered; it reads GYNERPSPTPTFASDPAWSPRIQ.

It belongs to the TolB family. The Tol-Pal system is composed of five core proteins: the inner membrane proteins TolA, TolQ and TolR, the periplasmic protein TolB and the outer membrane protein Pal. They form a network linking the inner and outer membranes and the peptidoglycan layer.

It localises to the periplasm. Its function is as follows. Part of the Tol-Pal system, which plays a role in outer membrane invagination during cell division and is important for maintaining outer membrane integrity. The polypeptide is Tol-Pal system protein TolB (Parvibaculum lavamentivorans (strain DS-1 / DSM 13023 / NCIMB 13966)).